The chain runs to 413 residues: MSTDPTSKPAFPITDEVRHALAVTKRGVDELLIEEEFAQKLAKSAATDKPLRIKLGLDPTAPDIHLGHTVVLNKMRQLQDLGHTVIFLIGDFTSLIGDPSGRNATRPPLTREQIESNAKTYFEQAALVLDRAKTEIRYNSEWSMPLGADGMIKLASRYTVARMLEREDFTKRFQGGIPISIHEFLYPLMQGYDSVALNADLELGGTDQKFNLLVGRELQKQYGQEQQCILTMPLLEGLDGVEKMSKSKGNYVGISEKPTDMFGKLMSISDVLMWRYFELLSFRSLDEIARFRGEAEGGRNPRDFKVMLAQEIVARFHSQADAERALEDFNHRAKGGVPDDIPAVTLAGAPLAIGQLLKQAGLVPSTSEALRNIEQGGVKIDGATVSDKALKVDAGEFVVQVGKRRFARVTLTA.

The short motif at 59–68 is the 'HIGH' region element; it reads PTAPDIHLGH. The 'KMSKS' region motif lies at 243 to 247; sequence KMSKS. An ATP-binding site is contributed by K246. The S4 RNA-binding domain maps to 351-411; that stretch reads LAIGQLLKQA…GKRRFARVTL (61 aa).

This sequence belongs to the class-I aminoacyl-tRNA synthetase family. TyrS type 2 subfamily. As to quaternary structure, homodimer.

It localises to the cytoplasm. The enzyme catalyses tRNA(Tyr) + L-tyrosine + ATP = L-tyrosyl-tRNA(Tyr) + AMP + diphosphate + H(+). Functionally, catalyzes the attachment of tyrosine to tRNA(Tyr) in a two-step reaction: tyrosine is first activated by ATP to form Tyr-AMP and then transferred to the acceptor end of tRNA(Tyr). This Burkholderia pseudomallei (strain 1710b) protein is Tyrosine--tRNA ligase.